We begin with the raw amino-acid sequence, 62 residues long: MTITFQLAVFALIVTSFLLVIGVPVVLASPDGWSSNKNTVFSGASLWIGLVFLVGILNSFVS.

A run of 2 helical transmembrane segments spans residues 8-28 and 41-61; these read AVFALIVTSFLLVIGVPVVLA and FSGASLWIGLVFLVGILNSFV.

This sequence belongs to the PsbZ family. As to quaternary structure, PSII is composed of 1 copy each of membrane proteins PsbA, PsbB, PsbC, PsbD, PsbE, PsbF, PsbH, PsbI, PsbJ, PsbK, PsbL, PsbM, PsbT, PsbY, PsbZ, Psb30/Ycf12, at least 3 peripheral proteins of the oxygen-evolving complex and a large number of cofactors. It forms dimeric complexes.

The protein localises to the plastid. Its subcellular location is the chloroplast thylakoid membrane. Its function is as follows. May control the interaction of photosystem II (PSII) cores with the light-harvesting antenna, regulates electron flow through the 2 photosystem reaction centers. PSII is a light-driven water plastoquinone oxidoreductase, using light energy to abstract electrons from H(2)O, generating a proton gradient subsequently used for ATP formation. This is Photosystem II reaction center protein Z from Zygnema circumcarinatum (Green alga).